A 576-amino-acid polypeptide reads, in one-letter code: Arginine--tRNA ligase (576 aa).

A 'HIGH' region motif is present at residues 122-132 (PNVAKEMHVGH).

This sequence belongs to the class-I aminoacyl-tRNA synthetase family. As to quaternary structure, monomer.

It is found in the cytoplasm. It carries out the reaction tRNA(Arg) + L-arginine + ATP = L-arginyl-tRNA(Arg) + AMP + diphosphate. This is Arginine--tRNA ligase from Hamiltonella defensa subsp. Acyrthosiphon pisum (strain 5AT).